A 360-amino-acid polypeptide reads, in one-letter code: Peptide chain release factor 1 (360 aa).

The residue at position 235 (Q235) is an N5-methylglutamine. Positions 284–293 (ARRQQEESST) are enriched in basic and acidic residues. The segment at 284-314 (ARRQQEESSTRRNLLGSGDRSDRNRTYNFPQ) is disordered.

The protein belongs to the prokaryotic/mitochondrial release factor family. Methylated by PrmC. Methylation increases the termination efficiency of RF1.

It localises to the cytoplasm. Functionally, peptide chain release factor 1 directs the termination of translation in response to the peptide chain termination codons UAG and UAA. The protein is Peptide chain release factor 1 of Erwinia tasmaniensis (strain DSM 17950 / CFBP 7177 / CIP 109463 / NCPPB 4357 / Et1/99).